We begin with the raw amino-acid sequence, 652 residues long: Phosphomethylpyrimidine synthase (652 aa).

Substrate contacts are provided by residues asparagine 235, methionine 264, tyrosine 293, histidine 329, serine 349–glycine 351, aspartate 390–arginine 393, and glutamate 429. Histidine 433 contributes to the Zn(2+) binding site. Tyrosine 456 provides a ligand contact to substrate. Histidine 497 lines the Zn(2+) pocket. [4Fe-4S] cluster-binding residues include cysteine 577, cysteine 580, and cysteine 585.

It belongs to the ThiC family. Homodimer. Requires [4Fe-4S] cluster as cofactor.

It catalyses the reaction 5-amino-1-(5-phospho-beta-D-ribosyl)imidazole + S-adenosyl-L-methionine = 4-amino-2-methyl-5-(phosphooxymethyl)pyrimidine + CO + 5'-deoxyadenosine + formate + L-methionine + 3 H(+). The protein operates within cofactor biosynthesis; thiamine diphosphate biosynthesis. Catalyzes the synthesis of the hydroxymethylpyrimidine phosphate (HMP-P) moiety of thiamine from aminoimidazole ribotide (AIR) in a radical S-adenosyl-L-methionine (SAM)-dependent reaction. The protein is Phosphomethylpyrimidine synthase of Shewanella woodyi (strain ATCC 51908 / MS32).